Reading from the N-terminus, the 131-residue chain is Large ribosomal subunit protein bL12 (131 aa).

Residues 99–125 (ESTPKPIKEGTNKDDAEETKKKLEEAG) are compositionally biased toward basic and acidic residues. The tract at residues 99-131 (ESTPKPIKEGTNKDDAEETKKKLEEAGAKVTVK) is disordered.

This sequence belongs to the bacterial ribosomal protein bL12 family. In terms of assembly, homodimer. Part of the ribosomal stalk of the 50S ribosomal subunit. Forms a multimeric L10(L12)X complex, where L10 forms an elongated spine to which 2 to 4 L12 dimers bind in a sequential fashion. Binds GTP-bound translation factors.

Functionally, forms part of the ribosomal stalk which helps the ribosome interact with GTP-bound translation factors. Is thus essential for accurate translation. In Gloeothece citriformis (strain PCC 7424) (Cyanothece sp. (strain PCC 7424)), this protein is Large ribosomal subunit protein bL12.